The primary structure comprises 148 residues: Helix-loop-helix protein 14 (148 aa).

Disordered regions lie at residues 1-21 (MAKK…HQVN), 63-83 (DPQQ…NSNN), and 112-132 (GDVS…SYSP). The basic motif stretch occupies residues 4-17 (KNQVARNERERKRV). The bHLH domain occupies 4–56 (KNQVARNERERKRVHQVNHGFDVLRNRLQPKNHTKKWSKADTLREAVKYIQQL). A helix-loop-helix motif region spans residues 18–56 (HQVNHGFDVLRNRLQPKNHTKKWSKADTLREAVKYIQQL). The span at 63–78 (DPQQPSVSSSTPDYTM) shows a compositional bias: polar residues. A compositionally biased stretch (low complexity) spans 120 to 132 (SPTSSVSSSSYSP).

It is found in the nucleus. In terms of biological role, probable transcription factor, involved in determining neuroblast cell fate, morphogenesis and aspects of terminal differentiation in both left/right symmetric and asymmetric neuronal lineages. The chain is Helix-loop-helix protein 14 from Caenorhabditis elegans.